A 342-amino-acid chain; its full sequence is Heparan sulfate glucosamine 3-O-sulfotransferase 6 (342 aa).

Residues methionine 1–glutamine 21 form a disordered region. Over methionine 1–proline 31 the chain is Cytoplasmic. The helical; Signal-anchor for type II membrane protein transmembrane segment at methionine 32–glycine 49 threads the bilayer. At arginine 50–glycine 342 the chain is on the lumenal side. The tract at residues alanine 55–proline 85 is disordered. Positions glutamate 66–proline 85 are enriched in low complexity. 3'-phosphoadenylyl sulfate is bound at residue lysine 100 to arginine 104. Substrate contacts are provided by residues glutamate 122–arginine 128 and lysine 153–serine 156. Arginine 181 and serine 189 together coordinate 3'-phosphoadenylyl sulfate. Tryptophan 220–serine 221 lines the substrate pocket. Residue asparagine 281 is glycosylated (N-linked (GlcNAc...) asparagine). A disulfide bridge connects residues cysteine 288 and cysteine 300. Residue lysine 305 to histidine 309 participates in 3'-phosphoadenylyl sulfate binding.

This sequence belongs to the sulfotransferase 1 family.

Its subcellular location is the golgi apparatus membrane. The catalysed reaction is alpha-D-glucosaminyl-[heparan sulfate](n) + 3'-phosphoadenylyl sulfate = 3-sulfo-alpha-D-glucosaminyl-[heparan sulfate](n) + adenosine 3',5'-bisphosphate + H(+). Its function is as follows. Sulfotransferase that utilizes 3'-phospho-5'-adenylyl sulfate (PAPS) to catalyze the transfer of a sulfo group to heparan sulfate. The substrate-specific O-sulfation generates an enzyme-modified heparan sulfate which acts as a binding receptor to Herpes Simplex Virus-1 (HSV-1) and permits its entry. Unlike 3-OST-1, does not convert non-anticoagulant heparan sulfate to anticoagulant heparan sulfate. This chain is Heparan sulfate glucosamine 3-O-sulfotransferase 6 (HS3ST6), found in Homo sapiens (Human).